The chain runs to 335 residues: tRNA N6-adenosine threonylcarbamoyltransferase (335 aa).

A divalent metal cation-binding residues include His-109, His-113, and Tyr-130. Substrate contacts are provided by residues Tyr-130–Gly-134, Asp-162, Gly-177, Glu-181, and Asn-266. An a divalent metal cation-binding site is contributed by Asp-294.

It belongs to the KAE1 / TsaD family. As to quaternary structure, component of the EKC/KEOPS complex composed of at least GON7, TP53RK, TPRKB, OSGEP and LAGE3; the whole complex dimerizes. A divalent metal cation is required as a cofactor. Widely expressed at low level. Expressed at intermediate level in lung. Weakly expressed in testis, skeletal muscle, kidney, liver, spleen, brain and heart.

It localises to the cytoplasm. The protein resides in the nucleus. The catalysed reaction is L-threonylcarbamoyladenylate + adenosine(37) in tRNA = N(6)-L-threonylcarbamoyladenosine(37) in tRNA + AMP + H(+). Its function is as follows. Component of the EKC/KEOPS complex that is required for the formation of a threonylcarbamoyl group on adenosine at position 37 (t(6)A37) in tRNAs that read codons beginning with adenine. The complex is probably involved in the transfer of the threonylcarbamoyl moiety of threonylcarbamoyl-AMP (TC-AMP) to the N6 group of A37. OSGEP likely plays a direct catalytic role in this reaction, but requires other protein(s) of the complex to fulfill this activity. The protein is tRNA N6-adenosine threonylcarbamoyltransferase (Osgep) of Mus musculus (Mouse).